The sequence spans 285 residues: Bark agglutinin I polypeptide A (285 aa).

The signal sequence occupies residues 1 to 31 (MTSYNFKTQTSFPLLLSISFFFLLLLNKVNS). Residue asparagine 147 is glycosylated (N-linked (GlcNAc...) asparagine). Glutamate 156 and aspartate 158 together coordinate Mn(2+). Ca(2+) contacts are provided by aspartate 158, phenylalanine 160, asparagine 162, and aspartate 166. Mn(2+) contacts are provided by aspartate 166 and histidine 171. The N-linked (GlcNAc...) asparagine glycan is linked to asparagine 188.

The protein belongs to the leguminous lectin family. In terms of assembly, RPbAI is composed of two polypeptides, A and B, that associate into five different tetrameric isolectins. The A4 combination is the only one devoid of agglutination activity. Isoform B4 displays maximal agglutination activity. As to expression, strong expression in seed. Lower levels in the flower, and the bark of the roots. No expression in leaf. The lectin accumulates in the inner bark in autumn.

Functionally, N-acetyl-D-galactosamine specific lectin. Bark lectins are storage protein that probably maintains stocks of nitrogen during dormant period. Self-aggregatable molecules that can bind their own carbohydrate side chains. They could also play a role in the plant's defense against phytophagous invertebrates or herbivorous higher animals. This chain is Bark agglutinin I polypeptide A, found in Robinia pseudoacacia (Black locust).